The chain runs to 185 residues: MFPLNFHYEDVSRQDPLLNRITPTLWKFLGSCEIRVVPNGPYNFIIKNGKLAMEIPRGQKFIQTQRGSTGKSFRSNPFLGSNKDKGYVSDLARQSTLRGHGMSNFSVRISTVMSLLDFPVEIRKNSIQFSMETEFCEFAPQLQDHFEIFEHIRGFNVTIVTSANTQDETLPLWSGFLQKDEGETQ.

It belongs to the universal ribosomal protein uL5 family.

It is found in the mitochondrion. This Brassica napus (Rape) protein is Large ribosomal subunit protein uL5m (RPL5).